A 471-amino-acid chain; its full sequence is Monocarboxylate transporter 4 (471 aa).

Over 1–17 the chain is Cytoplasmic; it reads MGGAVVDEGPTGIKAPD. A helical transmembrane segment spans residues 18–38; the sequence is GGWGWAVLFGCFIITGFSYAF. Over 39–61 the chain is Extracellular; the sequence is PKAVSVFFKELMHEFGIGYSDTA. The chain crosses the membrane as a helical span at residues 62–82; sequence WISSILLAMLYGTGPLCSMCV. At 83–84 the chain is on the cytoplasmic side; it reads NR. A helical transmembrane segment spans residues 85–105; sequence FGCRPVMLVGGLFASLGMVAA. Residues 106-109 are Extracellular-facing; sequence SFCR. The chain crosses the membrane as a helical span at residues 110 to 130; it reads SIIQIYLTTGVITGLGLALNF. Residues 131–149 lie on the Cytoplasmic side of the membrane; that stretch reads QPSLIMLNRYFNKRRPMAN. The helical transmembrane segment at 150 to 170 threads the bilayer; sequence GLAAAGSPVFLCALSPLGQLL. Over 171 to 179 the chain is Extracellular; it reads QDHYGWRGG. A helical transmembrane segment spans residues 180-200; it reads FLILGGLLLNCCVCAALMRPL. Over 201–231 the chain is Cytoplasmic; that stretch reads VAPQASGGAEPHGPQRPSPRLLDLSVFRDRG. A helical transmembrane segment spans residues 232–252; the sequence is FLIYAVAASIMVLGLFVPPVF. Over 253–267 the chain is Extracellular; that stretch reads VVSYAKDMGVPDTKA. The chain crosses the membrane as a helical span at residues 268-288; that stretch reads AFLLTILGFIDIFARPTAGFI. The Cytoplasmic portion of the chain corresponds to 289–298; the sequence is TGLKKVRPYS. Residues 299-319 form a helical membrane-spanning segment; sequence VYLFSFAMFFNGFTDLTGSTA. The Extracellular segment spans residues 320-321; sequence SD. The helical transmembrane segment at 322–342 threads the bilayer; the sequence is YGGLVVFCIFFGISYGMVGAL. Over 343-355 the chain is Cytoplasmic; the sequence is QFEVLMAIVGTQK. The helical transmembrane segment at 356–376 threads the bilayer; the sequence is FSSAIGLVLLLEAVAVLIGPP. At 377–391 the chain is on the extracellular side; that stretch reads SGGKLLDATKVYKYV. The chain crosses the membrane as a helical span at residues 392-412; it reads FILAGAEVLTSSLVLLLGNFF. Topologically, residues 413 to 471 are cytoplasmic; that stretch reads CIGKRKRPEVTKPEEVASEEEKLHKPPVDVRVDSREVEHFLKAEPEKNGEVVHTPETSV. Basolateral sorting signal regions lie at residues 429-447 and 447-471; these read ASEE…VDSR and REVE…ETSV. A Phosphoserine modification is found at S430. A Phosphothreonine modification is found at T466. The residue at position 470 (S470) is a Phosphoserine.

The protein belongs to the major facilitator superfamily. Monocarboxylate porter (TC 2.A.1.13) family. In terms of assembly, interacts with BSG; interaction mediates SLC16A3 targeting to the plasma membrane. As to expression, detected in testis, small intestine, parotid gland, lung and brain. Small amounts are detected in heart, kidney and spleen. Expressed in skeletal muscle.

The protein localises to the cell membrane. It is found in the basolateral cell membrane. It carries out the reaction (S)-lactate(in) + H(+)(in) = (S)-lactate(out) + H(+)(out). The catalysed reaction is pyruvate(out) + H(+)(out) = pyruvate(in) + H(+)(in). Functionally, proton-dependent transporter of monocarboxylates such as L-lactate and pyruvate. Plays a predominant role in the L-lactate efflux from highly glycolytic cells. In Rattus norvegicus (Rat), this protein is Monocarboxylate transporter 4 (Slc16a3).